The chain runs to 260 residues: DNA-directed RNA polymerase subunit Rpo3 (260 aa).

Belongs to the archaeal Rpo3/eukaryotic RPB3 RNA polymerase subunit family. Part of the RNA polymerase complex.

It is found in the cytoplasm. The enzyme catalyses RNA(n) + a ribonucleoside 5'-triphosphate = RNA(n+1) + diphosphate. Its function is as follows. DNA-dependent RNA polymerase (RNAP) catalyzes the transcription of DNA into RNA using the four ribonucleoside triphosphates as substrates. The chain is DNA-directed RNA polymerase subunit Rpo3 from Pyrobaculum aerophilum (strain ATCC 51768 / DSM 7523 / JCM 9630 / CIP 104966 / NBRC 100827 / IM2).